Consider the following 220-residue polypeptide: Serine protease-like protein 51 (220 aa).

The signal sequence occupies residues 1–16; the sequence is MFQLLIPLLLALKGHA. In terms of domain architecture, Peptidase S1 spans 23-220; the sequence is VQCGHRPAFP…SSKWVSSVGA (198 aa). Asn-33 carries an N-linked (GlcNAc...) asparagine glycan. Cys-64 and Cys-80 are disulfide-bonded. Asn-92 is a glycosylation site (N-linked (GlcNAc...) asparagine). Cysteines 157 and 170 form a disulfide.

Belongs to the peptidase S1 family.

It localises to the secreted. This is Serine protease-like protein 51 from Homo sapiens (Human).